We begin with the raw amino-acid sequence, 801 residues long: Lon protease 2 (801 aa).

Positions 14 to 209 constitute a Lon N-terminal domain; that stretch reads LPMLPVRDIV…LVNEILAAEL (196 aa). 361 to 368 contributes to the ATP binding site; that stretch reads GPPGVGKT. Residues 597–778 form the Lon proteolytic domain; that stretch reads DSQVGVVQGL…DEVFAVAFDK (182 aa). Catalysis depends on residues Ser-684 and Lys-727. Over residues 780–791 the composition is skewed to basic and acidic residues; that stretch reads AKGQEKKPAAKK. Residues 780–801 form a disordered region; it reads AKGQEKKPAAKKDPKKTKSLAA. Positions 792–801 are enriched in basic residues; the sequence is DPKKTKSLAA.

This sequence belongs to the peptidase S16 family. As to quaternary structure, homohexamer. Organized in a ring with a central cavity.

Its subcellular location is the cytoplasm. It catalyses the reaction Hydrolysis of proteins in presence of ATP.. ATP-dependent serine protease that mediates the selective degradation of mutant and abnormal proteins as well as certain short-lived regulatory proteins. Required for cellular homeostasis and for survival from DNA damage and developmental changes induced by stress. Degrades polypeptides processively to yield small peptide fragments that are 5 to 10 amino acids long. Binds to DNA in a double-stranded, site-specific manner. In Bdellovibrio bacteriovorus (strain ATCC 15356 / DSM 50701 / NCIMB 9529 / HD100), this protein is Lon protease 2.